The sequence spans 712 residues: Polyribonucleotide nucleotidyltransferase (712 aa).

Mg(2+)-binding residues include D487 and D493. The KH domain occupies 554-613 (PKIITMTINPDKIRDVIGPSGKQINKIIEETGVKIDIEQDGTVFISSINQEMNDKAKKII). The region spanning 623–691 (GEIYEGKVKR…KQGRVNLSRK (69 aa)) is the S1 motif domain.

The protein belongs to the polyribonucleotide nucleotidyltransferase family. Mg(2+) serves as cofactor.

It is found in the cytoplasm. It carries out the reaction RNA(n+1) + phosphate = RNA(n) + a ribonucleoside 5'-diphosphate. Functionally, involved in mRNA degradation. Catalyzes the phosphorolysis of single-stranded polyribonucleotides processively in the 3'- to 5'-direction. This chain is Polyribonucleotide nucleotidyltransferase, found in Bacillus cereus (strain G9842).